Consider the following 139-residue polypeptide: Transmembrane protein 250 (139 aa).

2 consecutive transmembrane segments (helical) span residues 56 to 76 (FLLYFSCSLFTAALWGALAAL) and 116 to 136 (VYGIHVTMLLVGGLGWCFMVF).

(Microbial infection) Interacts with herpes simplex virus 1/HHV-1 protein CVC2/UL25.

It localises to the membrane. It is found in the nucleus. Its subcellular location is the cytoplasm. Functionally, may play a role in cell proliferation by promoting progression into S phase. Its function is as follows. (Microbial infection) Promotes human herpes simplex virus 1/HHV-1 proliferation. The polypeptide is Transmembrane protein 250 (Homo sapiens (Human)).